A 706-amino-acid chain; its full sequence is Polyribonucleotide nucleotidyltransferase (706 aa).

The Mg(2+) site is built by Asp486 and Asp492. One can recognise a KH domain in the interval 553–612 (PRIHTIKISTDKIKDVIGKGGSVIRALTEETGTTIEIEDDGTVRIASTDGEKAKHAIRRI). Residues 622 to 690 (GRVYQGKVTR…RQGRVRLSIK (69 aa)) form the S1 motif domain.

It belongs to the polyribonucleotide nucleotidyltransferase family. Component of the RNA degradosome, which is a multiprotein complex involved in RNA processing and mRNA degradation. Mg(2+) is required as a cofactor.

The protein resides in the cytoplasm. The catalysed reaction is RNA(n+1) + phosphate = RNA(n) + a ribonucleoside 5'-diphosphate. Its function is as follows. Involved in mRNA degradation. Catalyzes the phosphorolysis of single-stranded polyribonucleotides processively in the 3'- to 5'-direction. The protein is Polyribonucleotide nucleotidyltransferase of Pectobacterium atrosepticum (strain SCRI 1043 / ATCC BAA-672) (Erwinia carotovora subsp. atroseptica).